A 299-amino-acid polypeptide reads, in one-letter code: 4-diphosphocytidyl-2-C-methyl-D-erythritol kinase (299 aa).

The active site involves Lys-33. ATP is bound at residue 115–125 (PLASGLGGGSS). Residue Asp-154 is part of the active site.

This sequence belongs to the GHMP kinase family. IspE subfamily.

It catalyses the reaction 4-CDP-2-C-methyl-D-erythritol + ATP = 4-CDP-2-C-methyl-D-erythritol 2-phosphate + ADP + H(+). It functions in the pathway isoprenoid biosynthesis; isopentenyl diphosphate biosynthesis via DXP pathway; isopentenyl diphosphate from 1-deoxy-D-xylulose 5-phosphate: step 3/6. Functionally, catalyzes the phosphorylation of the position 2 hydroxy group of 4-diphosphocytidyl-2C-methyl-D-erythritol. In Deinococcus geothermalis (strain DSM 11300 / CIP 105573 / AG-3a), this protein is 4-diphosphocytidyl-2-C-methyl-D-erythritol kinase.